A 472-amino-acid polypeptide reads, in one-letter code: Argininosuccinate lyase (472 aa).

This sequence belongs to the lyase 1 family. Argininosuccinate lyase subfamily.

It is found in the cytoplasm. It carries out the reaction 2-(N(omega)-L-arginino)succinate = fumarate + L-arginine. It functions in the pathway amino-acid biosynthesis; L-arginine biosynthesis; L-arginine from L-ornithine and carbamoyl phosphate: step 3/3. In Rhodococcus jostii (strain RHA1), this protein is Argininosuccinate lyase.